Here is a 406-residue protein sequence, read N- to C-terminus: Zinc finger protein CONSTANS-LIKE 6 (406 aa).

Positions 17, 20, 40, and 45 each coordinate Zn(2+). The B box-type; atypical zinc finger occupies 17–59 (CDSCVKRRARWYCAADDAFLCHACDGSVHSANPLARRHERVRL). Residues 63-95 (SAGKYRHASPPHQATWHQGFTRKARTPRGGKKS) form a disordered region. Over residues 82-95 (FTRKARTPRGGKKS) the composition is skewed to basic residues. The 43-residue stretch at 357–399 (REARVSRYREKRRTRLFSKKIRYEVRKLNAEKRPRMKGRFVKR) folds into the CCT domain.

The protein belongs to the CONSTANS family.

It localises to the nucleus. The polypeptide is Zinc finger protein CONSTANS-LIKE 6 (COL6) (Arabidopsis thaliana (Mouse-ear cress)).